The primary structure comprises 546 residues: Immunoglobulin heavy constant epsilon (546 aa).

The Extracellular portion of the chain corresponds to 1-499 (ASTQSPSVFP…EAPWTWTGLC (499 aa)). Ig-like domains lie at 6–103 (PSVF…KTFS), 112–210 (PTVK…KKCA), 214–318 (PRGV…TKTS), and 324–423 (PEVY…RAVS). 5 disulfide bridges follow: cysteine 15–cysteine 105, cysteine 29–cysteine 85, cysteine 135–cysteine 193, cysteine 239–cysteine 299, and cysteine 345–cysteine 405. Residues asparagine 21, asparagine 49, asparagine 99, asparagine 146, asparagine 252, asparagine 264, and asparagine 275 are each glycosylated (N-linked (GlcNAc...) asparagine). The helical transmembrane segment at 500–520 (IFAALFLLSVSYSAAITLLMV) threads the bilayer. The Cytoplasmic segment spans residues 521–546 (QRFLSATRQGRPQTSLDYTNVLQPHA).

In terms of assembly, the basic structural unit of both sIgE and mIgE molecules consists of two identical heavy chains and two identical light chains; disulfide-linked. N-terminal variable regions of the heavy and light chains form the antigen binding sites, whereas the C-terminal constant regions of the heavy chains interact with immune receptors to mediate effector functions. Part of IgE antibody. Interacts (via CH3) with the alpha chain/FCE1RA of IgE Fc receptor complex. Interacts (via CH3 region) with FCER2 (via C-type lectin domain); this interaction regulates IgE homeostasis. As to quaternary structure, part of IgE B cell antigen receptor complex (BCR). The BCR complex consists of one mIgE molecule responsible for antigen binding, non-covalently associated with CD79A and CD79B signaling chains. As to expression, expressed in B lymphocytes stimulated with IL4 and CD40.

The protein resides in the secreted. It is found in the cell membrane. Constant region of immunoglobulin heavy chains. Immunoglobulins, also known as antibodies, are membrane-bound or secreted glycoproteins produced by B lymphocytes. In the recognition phase of humoral immunity, the membrane-bound immunoglobulins serve as receptors which, upon binding of a specific antigen, trigger the clonal expansion and differentiation of B lymphocytes into immunoglobulins-secreting plasma cells. Secreted immunoglobulins mediate the effector phase of humoral immunity, which results in the elimination of bound antigens. The antigen binding site is formed by the variable domain of one heavy chain, together with that of its associated light chain. Thus, each immunoglobulin has two antigen binding sites with remarkable affinity for a particular antigen. The variable domains are assembled by a process called V-(D)-J rearrangement and can then be subjected to somatic hypermutations which, after exposure to antigen and selection, allow affinity maturation for a particular antigen. Its function is as follows. Constant region of secreted IgE, also known as the Fc region of IgE antibody. Mediates IgE effector functions on myeloid and lymphoid cells primarily via two Fc receptors, the high-affinity IgE Fc receptor complex/FCER1A:MS4A2:FCGR1A and the low-affinity FCER2 receptor, which upon antigen/allergen cross-linking initiate signaling pathways that lead to immune cell activation and differentiation. Triggers the immediate hypersensitivity response to allergens as a host defense mechanism against helminth parasites, pathogenic bacteria and venom toxicity. When dysregulated, it can elicit harmful life-threatening allergic and anaphylactic reactions. Stimulates the high-affinity IgE Fc receptor complex/FCER1A:MS4A2:FCGR1A on mast cells, basophils and eosinophils leading to secretion of vasoactive amines, lipid mediators and cytokines that contribute to inflammatory response, tissue remodeling and cytotoxicity against microbes. On macrophages, cross-linking of FCER2 by IgE immune complexes induces intracellular killing of parasites through activation of L-Arginine-nitric oxide pathway. Activates macrophages to kill tumor cells via antigen-specific antibody-dependent cytotoxicity (ADCC). Triggers differentiation of quiescent M0 macrophages toward M1 state and reprograms M2 macrophages toward a proinflammatory state with antitumor functions. Stimulates FCER2 on B cells and initiates IgE-dependent antigen uptake and presentation to T cells. Functionally, constant region of membrane-bound IgE (long mIgE), part of the B cell receptor complex (BCR). Upon antigen cross-linking triggers quick BCR signaling, ensuring survival of IgE-switched B cells and differentiation into plasma cells, thus regulating both primary and memory IgE responses. In terms of biological role, constant region of membrane-bound IgE (short mIgE), part of the B cell receptor complex (BCR). Upon antigen cross-linking initiates slower but sustained BCR signaling that negatively regulates mature B cell proliferation. The polypeptide is Immunoglobulin heavy constant epsilon (Homo sapiens (Human)).